A 304-amino-acid chain; its full sequence is GMP synthase [glutamine-hydrolyzing] subunit B (304 aa).

One can recognise a GMPS ATP-PPase domain in the interval 2–183; it reads VKVEKFIPNA…LDLPEEICER (182 aa). ATP is bound at residue 28–34; the sequence is SGGVDSS.

Heterodimer composed of a glutamine amidotransferase subunit (A) and a GMP-binding subunit (B).

It carries out the reaction XMP + L-glutamine + ATP + H2O = GMP + L-glutamate + AMP + diphosphate + 2 H(+). The protein operates within purine metabolism; GMP biosynthesis; GMP from XMP (L-Gln route): step 1/1. Its function is as follows. Catalyzes the synthesis of GMP from XMP. The sequence is that of GMP synthase [glutamine-hydrolyzing] subunit B from Methanococcoides burtonii (strain DSM 6242 / NBRC 107633 / OCM 468 / ACE-M).